We begin with the raw amino-acid sequence, 89 residues long: Small capsomere-interacting protein (89 aa).

Positions 1-31 are disordered; sequence MTTIRGDDLSNQITQISGSSSKKEEEKKKQQ. Polar residues predominate over residues 9–18; the sequence is LSNQITQISG.

Belongs to the herpesviridae small capsomere-interacting protein family. In terms of assembly, interacts with the major capsid protein/MCP.

It localises to the virion. Its subcellular location is the host nucleus. Functionally, participates in the assembly of the infectious particles by decorating the outer surface of the capsid shell and thus forming a layer between the capsid and the tegument. Complexes composed of the major capsid protein and small capsomere-interacting protein/SCP assemble together in the host cytoplasm and are translocated to the nucleus, where they accumulate and participate in capsid assembly. The sequence is that of Small capsomere-interacting protein from Human herpesvirus 6B (HHV-6 variant B).